A 124-amino-acid polypeptide reads, in one-letter code: Large ribosomal subunit protein bL12 (124 aa).

It belongs to the bacterial ribosomal protein bL12 family. Homodimer. Part of the ribosomal stalk of the 50S ribosomal subunit. Forms a multimeric L10(L12)X complex, where L10 forms an elongated spine to which 2 to 4 L12 dimers bind in a sequential fashion. Binds GTP-bound translation factors.

Its function is as follows. Forms part of the ribosomal stalk which helps the ribosome interact with GTP-bound translation factors. Is thus essential for accurate translation. The sequence is that of Large ribosomal subunit protein bL12 from Rickettsia akari (strain Hartford).